The chain runs to 279 residues: Protein phosphatase 1 regulatory subunit 3E (279 aa).

2 positions are modified to phosphoserine: serine 16 and serine 33. Residues 28-86 (RSQRPSLEEEPEEEPGEGGTRFGARSRAHAPSRGRRARSAPAGGGGARAPRSRSPDTRK) form a disordered region. Basic residues predominate over residues 51–65 (ARSRAHAPSRGRRAR). Residue serine 66 is modified to Phosphoserine. Positions 87-90 (RVRF) match the PP1-binding motif motif. The region spanning 154-259 (AARLLTQRIC…NNGGRDYALR (106 aa)) is the CBM21 domain. The segment at 176-198 (GSARVVDLAYEKRVSVRWSADGW) is glycogen-binding motif. The tract at residues 248-256 (WDNNGGRDY) is substrate-binding motif.

Expressed in skeletal muscle and heart with barely detectable levels in liver.

Acts as a glycogen-targeting subunit for PP1. PP1 is involved in glycogen metabolism and contributes to the activation of glycogen synthase leading to an increase in glycogen synthesis. This chain is Protein phosphatase 1 regulatory subunit 3E (PPP1R3E), found in Homo sapiens (Human).